Consider the following 214-residue polypeptide: MKFFIDTADVKEIREANELGLVDGVTTNPSLIAKSGRRFEEVIKEITGIVDGPISAEVISLEHDGMIAEATELAKIHPNIVIKLPMTPEGLKATKTLYKRGIKTNVTLIFTPMQALLAAKAGATYVSPFVGRLDDISQNGMAIIQEIRTIFDNYGMDAEIIVASIRNPIHVLDSALIGADICTIPYSVMLQLAKHPLTDAGIKKFLEDWEKVPK.

K83 serves as the catalytic Schiff-base intermediate with substrate.

This sequence belongs to the transaldolase family. Type 3B subfamily.

The protein localises to the cytoplasm. It carries out the reaction D-sedoheptulose 7-phosphate + D-glyceraldehyde 3-phosphate = D-erythrose 4-phosphate + beta-D-fructose 6-phosphate. The protein operates within carbohydrate degradation; pentose phosphate pathway; D-glyceraldehyde 3-phosphate and beta-D-fructose 6-phosphate from D-ribose 5-phosphate and D-xylulose 5-phosphate (non-oxidative stage): step 2/3. Its function is as follows. Transaldolase is important for the balance of metabolites in the pentose-phosphate pathway. The sequence is that of Probable transaldolase from Geobacter sp. (strain M21).